A 186-amino-acid polypeptide reads, in one-letter code: Dihydrofolate reductase (186 aa).

One can recognise a DHFR domain in the interval 3 to 184 (PLNCIVAVSQ…IKYKFEVYEK (182 aa)). NADP(+)-binding positions include Ala9 and 15-21 (GIGKNGD). 30–35 (EYKYFQ) contributes to the substrate binding site. Lys32 is subject to N6-acetyllysine; alternate. Lys32 bears the N6-succinyllysine; alternate mark. 54–56 (RKT) contacts NADP(+). Arg70 is a binding site for substrate. Residues 76 to 78 (SRE) and 116 to 123 (GGSSVYKE) each bind NADP(+). The residue at position 162 (Cys162) is a Cysteine derivative; partial.

This sequence belongs to the dihydrofolate reductase family. As to quaternary structure, homodimer.

It localises to the mitochondrion. Its subcellular location is the cytoplasm. It carries out the reaction (6S)-5,6,7,8-tetrahydrofolate + NADP(+) = 7,8-dihydrofolate + NADPH + H(+). It functions in the pathway cofactor biosynthesis; tetrahydrofolate biosynthesis; 5,6,7,8-tetrahydrofolate from 7,8-dihydrofolate: step 1/1. Its function is as follows. Key enzyme in folate metabolism. Contributes to the de novo mitochondrial thymidylate biosynthesis pathway. Catalyzes an essential reaction for de novo glycine and purine synthesis, and for DNA precursor synthesis. Binds its own mRNA and that of DHFR2. The chain is Dihydrofolate reductase (DHFR) from Sus scrofa (Pig).